The primary structure comprises 259 residues: MNSFFPSRKLGQNFTVNLSVIKRIFAFVKNLNPQAIVEIGVGKGALTNYLLKLKIPYKGIEIDKRLIEYLLVEKILTEDQLVKGDILKKDFNSFFENLSPLLCGNIPYSITSPIINKFLESKLRSFVLMTQKEFANRLLAKVNSSDYSAFGAFCQYYLTITTVFKIDRHAFKPKPKVDSTLILLEKNKSVSYDFKFGLFLKQCFNQRRKMLINNLKHFFAVDYLLNIIQKQNLKTSIRAQELSPCQLFNLYQNICNGKN.

Positions 13, 15, 40, 61, 85, and 105 each coordinate S-adenosyl-L-methionine.

The protein belongs to the class I-like SAM-binding methyltransferase superfamily. rRNA adenine N(6)-methyltransferase family. RsmA subfamily.

The protein localises to the cytoplasm. It catalyses the reaction adenosine(1518)/adenosine(1519) in 16S rRNA + 4 S-adenosyl-L-methionine = N(6)-dimethyladenosine(1518)/N(6)-dimethyladenosine(1519) in 16S rRNA + 4 S-adenosyl-L-homocysteine + 4 H(+). In terms of biological role, specifically dimethylates two adjacent adenosines (A1518 and A1519) in the loop of a conserved hairpin near the 3'-end of 16S rRNA in the 30S particle. May play a critical role in biogenesis of 30S subunits. The chain is Ribosomal RNA small subunit methyltransferase A from Mycoplasma genitalium (strain ATCC 33530 / DSM 19775 / NCTC 10195 / G37) (Mycoplasmoides genitalium).